A 447-amino-acid polypeptide reads, in one-letter code: Cysteine--tRNA ligase (447 aa).

Residue C28 coordinates Zn(2+). The short motif at 30 to 40 is the 'HIGH' region element; sequence PTVYNYIHIGN. 3 residues coordinate Zn(2+): C211, H236, and E240. Positions 268 to 272 match the 'KMSKS' region motif; it reads KMSKS. Residue K271 coordinates ATP.

It belongs to the class-I aminoacyl-tRNA synthetase family. As to quaternary structure, monomer. Zn(2+) is required as a cofactor.

The protein resides in the cytoplasm. The catalysed reaction is tRNA(Cys) + L-cysteine + ATP = L-cysteinyl-tRNA(Cys) + AMP + diphosphate. In Streptococcus agalactiae serotype Ia (strain ATCC 27591 / A909 / CDC SS700), this protein is Cysteine--tRNA ligase.